Here is a 363-residue protein sequence, read N- to C-terminus: Chorismate synthase (363 aa).

R48 lines the NADP(+) pocket. Residues 125 to 127 (RSS), 238 to 239 (NA), G278, 293 to 297 (KPTAS), and R319 each bind FMN.

The protein belongs to the chorismate synthase family. Homotetramer. FMNH2 is required as a cofactor.

It carries out the reaction 5-O-(1-carboxyvinyl)-3-phosphoshikimate = chorismate + phosphate. It participates in metabolic intermediate biosynthesis; chorismate biosynthesis; chorismate from D-erythrose 4-phosphate and phosphoenolpyruvate: step 7/7. Catalyzes the anti-1,4-elimination of the C-3 phosphate and the C-6 proR hydrogen from 5-enolpyruvylshikimate-3-phosphate (EPSP) to yield chorismate, which is the branch point compound that serves as the starting substrate for the three terminal pathways of aromatic amino acid biosynthesis. This reaction introduces a second double bond into the aromatic ring system. The chain is Chorismate synthase from Acinetobacter baumannii (strain AB0057).